The sequence spans 189 residues: GTPase HRas (189 aa).

GTP is bound at residue G10 to S17. The Effector region motif lies at Y32–Y40. GTP is bound by residues D57–Q61 and N116–D119. S-palmitoyl cysteine; by host attachment occurs at residues C181 and C184. The residue at position 186 (C186) is a Cysteine methyl ester; by host. C186 carries the S-farnesyl cysteine; by host lipid modification. Residues V187–S189 constitute a propeptide, removed in mature form.

It belongs to the small GTPase superfamily. Ras family.

The protein resides in the host cell membrane. It catalyses the reaction GTP + H2O = GDP + phosphate + H(+). Its activity is regulated as follows. Alternates between an inactive form bound to GDP and an active form bound to GTP. Activated by a guanine nucleotide-exchange factor (GEF) and inactivated by a GTPase-activating protein (GAP). The chain is GTPase HRas (H-RAS) from Mus musculus (Mouse).